We begin with the raw amino-acid sequence, 418 residues long: Probable serine/threonine-protein kinase nek2 (418 aa).

The Protein kinase domain occupies 4 to 264 (YEILGALGKG…VNELLGYSFI (261 aa)). Residues 10–18 (LGKGSFGVV) and Lys-33 contribute to the ATP site. The Proton acceptor role is filled by Asp-135. Residues 278 to 363 (QGLKQMDEDL…SNLSLNCNNS (86 aa)) adopt a coiled-coil conformation.

The protein belongs to the protein kinase superfamily. NEK Ser/Thr protein kinase family. NIMA subfamily.

The enzyme catalyses L-seryl-[protein] + ATP = O-phospho-L-seryl-[protein] + ADP + H(+). It catalyses the reaction L-threonyl-[protein] + ATP = O-phospho-L-threonyl-[protein] + ADP + H(+). In terms of biological role, involved in centrosome biogenesis. Seems to be required for recruitment of centrosomal material and might be involved in de novo centrosome formation. The chain is Probable serine/threonine-protein kinase nek2 (nek2) from Dictyostelium discoideum (Social amoeba).